We begin with the raw amino-acid sequence, 382 residues long: Polyadenylate-binding protein 5 (382 aa).

RRM domains follow at residues 18 to 96 (AALY…WSQP), 106 to 182 (GNIF…RFKF), 199 to 276 (TNVF…RAQK), and 302 to 378 (VPIY…LGQA).

The protein localises to the cytoplasm. Its function is as follows. Binds the poly(A) tail of mRNA. May be involved in cytoplasmic regulatory processes of mRNA metabolism. Can probably bind to cytoplasmic RNA sequences other than poly(A) in vivo. In Gorilla gorilla gorilla (Western lowland gorilla), this protein is Polyadenylate-binding protein 5 (PABPC5).